The chain runs to 99 residues: Protein S100-A11 (99 aa).

Methionine 1 is modified (N-acetylmethionine). A Phosphothreonine modification is found at threonine 8. EF-hand domains are found at residues 10–47 and 53–88; these read RCIE…ELAA and KDPG…LAIA. The Ca(2+) site is built by asparagine 29, lysine 31, glutamate 36, aspartate 66, aspartate 68, aspartate 70, glutamine 72, and glutamate 77.

Belongs to the S-100 family. Homodimer; disulfide-linked. In terms of processing, phosphorylation at Thr-8 significantly suppresses homodimerization and promotes association with NCL/nucleolin which induces nuclear translocation.

It is found in the cytoplasm. Its subcellular location is the nucleus. Facilitates the differentiation and the cornification of keratinocytes. The polypeptide is Protein S100-A11 (S100A11) (Sus scrofa (Pig)).